A 317-amino-acid polypeptide reads, in one-letter code: DNA-directed RNA polymerase subunit alpha (317 aa).

Positions 1–230 (MIEIEMEKPK…EHLNLFITLT (230 aa)) are alpha N-terminal domain (alpha-NTD). The alpha C-terminal domain (alpha-CTD) stretch occupies residues 247–317 (KEKVLEMTIE…LGLGLRPSDE (71 aa)).

It belongs to the RNA polymerase alpha chain family. As to quaternary structure, homodimer. The RNAP catalytic core consists of 2 alpha, 1 beta, 1 beta' and 1 omega subunit. When a sigma factor is associated with the core the holoenzyme is formed, which can initiate transcription.

The catalysed reaction is RNA(n) + a ribonucleoside 5'-triphosphate = RNA(n+1) + diphosphate. Its function is as follows. DNA-dependent RNA polymerase catalyzes the transcription of DNA into RNA using the four ribonucleoside triphosphates as substrates. The polypeptide is DNA-directed RNA polymerase subunit alpha (Alkaliphilus oremlandii (strain OhILAs) (Clostridium oremlandii (strain OhILAs))).